A 120-amino-acid polypeptide reads, in one-letter code: NAD(P)H-quinone oxidoreductase subunit 3, chloroplastic (120 aa).

3 consecutive transmembrane segments (helical) span residues 9-29 (IFWA…LISG), 64-84 (MFAL…PWAM), and 88-108 (VLGV…IVGS).

The protein belongs to the complex I subunit 3 family. NDH is composed of at least 16 different subunits, 5 of which are encoded in the nucleus.

Its subcellular location is the plastid. The protein resides in the chloroplast thylakoid membrane. The enzyme catalyses a plastoquinone + NADH + (n+1) H(+)(in) = a plastoquinol + NAD(+) + n H(+)(out). It catalyses the reaction a plastoquinone + NADPH + (n+1) H(+)(in) = a plastoquinol + NADP(+) + n H(+)(out). Functionally, NDH shuttles electrons from NAD(P)H:plastoquinone, via FMN and iron-sulfur (Fe-S) centers, to quinones in the photosynthetic chain and possibly in a chloroplast respiratory chain. The immediate electron acceptor for the enzyme in this species is believed to be plastoquinone. Couples the redox reaction to proton translocation, and thus conserves the redox energy in a proton gradient. The sequence is that of NAD(P)H-quinone oxidoreductase subunit 3, chloroplastic from Acorus calamus var. americanus (American sweet flag).